We begin with the raw amino-acid sequence, 523 residues long: MCSWSLSSHTLTSPVRQAAMEPKSSSCGGAGIRLRLLVVLHLLLLVPSSAMAFNYADALAKSIIFFEGQRSGKLPPGNRMPWRADSGLTDGAQYNVDLVGGYYDAGDNVKFGLPMAFSTTMLAWSVLDFGKFMGAELPNARAAVRWGADYLLKAATATPGALYVQVADPNQDHRCWERPEDMDTPRSVYRVTADKPGSDVAGETAAALAASSMVFRRADPAYSARLLHAATQVFDFADRHRGSYSDSLASSVCPFYCSYSGYHDELLWGASWLHRASRNASFMSYVEANGMQLGAGDDDYSFSWDDKRVGTKVLLAKGFLRNRLHGLELYKAHSDSYICSLVPGTASFQSRYTPGGLLYREGSSNMQYVTTATFLMLAYAKYLRSSGATASCGDGGGGARGEVSAAELVAVAKRQVDYILGKNPAGMSYMVGFGCRYPRRAHHRGASMPSVRAHPGRISCDAGFGYLHSGEPNPNVLVGAVVGGPDSRDAFADDRGNFAQSEPATYINAPLVGALAYFAGTTK.

Positions 1–52 are cleaved as a signal peptide; it reads MCSWSLSSHTLTSPVRQAAMEPKSSSCGGAGIRLRLLVVLHLLLLVPSSAMA. D107 serves as the catalytic Nucleophile. N-linked (GlcNAc...) asparagine glycosylation is present at N279. Active-site residues include H442, D493, and E502.

The protein belongs to the glycosyl hydrolase 9 (cellulase E) family.

The protein localises to the secreted. The enzyme catalyses Endohydrolysis of (1-&gt;4)-beta-D-glucosidic linkages in cellulose, lichenin and cereal beta-D-glucans.. This is Endoglucanase 19 from Oryza sativa subsp. japonica (Rice).